A 316-amino-acid chain; its full sequence is MHSSGGFQKAIHGHALLLLLLLASGAETFRICAFNAQRLTLAKVAREPVLDTLVKILARCDIMVLQEVVDSSDTAIPLLLRELNRFGDSGPYASHSSLLLGRSTYKEKYVYLYRSHEAEVRDSYMYDDQDDLFTREPFVCWFSLRSKVLPSLVLVPLHTTPKAVETELNALYDVFLDASGRWQTKDVILLGDFNADCTSLTKKRLDDLVLRTQAGFHWAIADGVDTTVRASTHCTYDRIVLHGELLQSLLRGAAAFDFPQSFGLTEQEALNISDHYPVEVDLALSWAVHGVQPPCLATLWLSLLLPLLAPQLGLVA.

The N-terminal stretch at Met-1–Thr-28 is a signal peptide. Active-site residues include Glu-107 and His-158. Cys-197 and Cys-234 are oxidised to a cystine. Asn-271 is a glycosylation site (N-linked (GlcNAc...) asparagine).

It belongs to the DNase I family.

Its subcellular location is the endoplasmic reticulum. This Bos taurus (Bovine) protein is Deoxyribonuclease-1-like 1 (DNASE1L1).